The following is a 249-amino-acid chain: ATP synthase subunit a, chloroplastic (249 aa).

5 helical membrane-spanning segments follow: residues 40–60 (QVLI…VLAI), 97–117 (VPFI…GALL), 136–156 (INTT…AGLS), 201–221 (LVVV…VMFL), and 222–242 (GLFT…AYIG).

Belongs to the ATPase A chain family. In terms of assembly, F-type ATPases have 2 components, CF(1) - the catalytic core - and CF(0) - the membrane proton channel. CF(1) has five subunits: alpha(3), beta(3), gamma(1), delta(1), epsilon(1). CF(0) has four main subunits: a, b, b' and c.

Its subcellular location is the plastid. It is found in the chloroplast thylakoid membrane. Key component of the proton channel; it plays a direct role in the translocation of protons across the membrane. The chain is ATP synthase subunit a, chloroplastic from Nasturtium officinale (Watercress).